A 130-amino-acid chain; its full sequence is D-ribose pyranase (130 aa).

H20 acts as the Proton donor in catalysis. Residues D28, H97, and 119–121 (YAN) contribute to the substrate site.

This sequence belongs to the RbsD / FucU family. RbsD subfamily. In terms of assembly, homodecamer.

The protein localises to the cytoplasm. The enzyme catalyses beta-D-ribopyranose = beta-D-ribofuranose. It participates in carbohydrate metabolism; D-ribose degradation; D-ribose 5-phosphate from beta-D-ribopyranose: step 1/2. Functionally, catalyzes the interconversion of beta-pyran and beta-furan forms of D-ribose. This chain is D-ribose pyranase, found in Paracidovorax citrulli (strain AAC00-1) (Acidovorax citrulli).